The primary structure comprises 458 residues: tRNA-2-methylthio-N(6)-dimethylallyladenosine synthase (458 aa).

The MTTase N-terminal domain occupies 15-134 (KKVFIKTYGC…LPDLLEQTKQ (120 aa)). Cys-24, Cys-60, Cys-97, Cys-175, Cys-179, and Cys-182 together coordinate [4Fe-4S] cluster. The Radical SAM core domain maps to 161–393 (RKRGVSAFLT…QVLLLEQQNA (233 aa)). One can recognise a TRAM domain in the interval 396–457 (RSKIGQTTDV…SNSFVGEMTN (62 aa)).

It belongs to the methylthiotransferase family. MiaB subfamily. In terms of assembly, monomer. [4Fe-4S] cluster is required as a cofactor.

The protein resides in the cytoplasm. It carries out the reaction N(6)-dimethylallyladenosine(37) in tRNA + (sulfur carrier)-SH + AH2 + 2 S-adenosyl-L-methionine = 2-methylsulfanyl-N(6)-dimethylallyladenosine(37) in tRNA + (sulfur carrier)-H + 5'-deoxyadenosine + L-methionine + A + S-adenosyl-L-homocysteine + 2 H(+). Its function is as follows. Catalyzes the methylthiolation of N6-(dimethylallyl)adenosine (i(6)A), leading to the formation of 2-methylthio-N6-(dimethylallyl)adenosine (ms(2)i(6)A) at position 37 in tRNAs that read codons beginning with uridine. The chain is tRNA-2-methylthio-N(6)-dimethylallyladenosine synthase from Bartonella henselae (strain ATCC 49882 / DSM 28221 / CCUG 30454 / Houston 1) (Rochalimaea henselae).